Here is an 82-residue protein sequence, read N- to C-terminus: U10-myrmicitoxin-Mri1c (82 aa).

Residues 1 to 26 (MRLSYVSLTLAIIFVMAIVHAPETEA) form the signal peptide. Positions 27–52 (KAYPEADAVGEASAVGEADAVGVADP) are excised as a propeptide. An Isoleucine amide modification is found at isoleucine 81.

This sequence belongs to the formicidae venom precursor-01 superfamily. In terms of tissue distribution, expressed by the venom gland.

The protein localises to the secreted. Induces paralysis 5 minutes after injection into blowflies (L.caesar). In most cases is not lethal 24 hours after injection, but paralysis is irreversible. May have antimicrobial properties, like most ant linear peptides. The polypeptide is U10-myrmicitoxin-Mri1c (Manica rubida (European giant red ant)).